A 126-amino-acid chain; its full sequence is Fumarate reductase subunit C (126 aa).

3 helical membrane passes run Ile-30–Gly-50, Val-64–Phe-84, and Val-105–Leu-125.

Belongs to the FrdC family. As to quaternary structure, part of an enzyme complex containing four subunits: a flavoprotein (FrdA), an iron-sulfur protein (FrdB), and two hydrophobic anchor proteins (FrdC and FrdD).

The protein localises to the cell membrane. Functionally, anchors the catalytic components of the fumarate reductase complex to the cell membrane, binds quinones. The sequence is that of Fumarate reductase subunit C from Mycobacterium tuberculosis (strain CDC 1551 / Oshkosh).